The following is a 229-amino-acid chain: MSASLARLERKLGYTFKDQDQMVLALTHRSYAGRNNERLEFLGDAILNFVAGEALFERFPQAREGQLSRLRARLVKGETLARLARGFDLGEYLRLGSGELKSGGFRRESILADALEALIGAIYLDADMQTARERVLAWLTDEFESLTLVDTNKDPKTRLQEFLQSRSCELPRYEVVDIQGEPHCRTFFVECEVVLLNNKSRGQGVSRRIAEQVAAAAALIALGVENGND.

In terms of domain architecture, RNase III spans L5–D127. Position 40 (E40) interacts with Mg(2+). The active site involves D44. Mg(2+)-binding residues include D113 and E116. E116 is a catalytic residue. The region spanning D154–V224 is the DRBM domain.

It belongs to the ribonuclease III family. As to quaternary structure, homodimer. Requires Mg(2+) as cofactor.

It is found in the cytoplasm. It carries out the reaction Endonucleolytic cleavage to 5'-phosphomonoester.. In terms of biological role, digests double-stranded RNA. Involved in the processing of primary rRNA transcript to yield the immediate precursors to the large and small rRNAs (23S and 16S). Processes some mRNAs, and tRNAs when they are encoded in the rRNA operon. Processes pre-crRNA and tracrRNA of type II CRISPR loci if present in the organism. The protein is Ribonuclease 3 of Pseudomonas putida (strain W619).